Consider the following 198-residue polypeptide: tRNA (pseudouridine(54)-N(1))-methyltransferase (198 aa).

S-adenosyl-L-methionine is bound by residues L130, G153, L176–L181, and C186.

The protein belongs to the methyltransferase superfamily. TrmY family. As to quaternary structure, homodimer.

It is found in the cytoplasm. It catalyses the reaction pseudouridine(54) in tRNA + S-adenosyl-L-methionine = N(1)-methylpseudouridine(54) in tRNA + S-adenosyl-L-homocysteine + H(+). Specifically catalyzes the N1-methylation of pseudouridine at position 54 (Psi54) in tRNAs. The protein is tRNA (pseudouridine(54)-N(1))-methyltransferase of Methanococcus maripaludis (strain C7 / ATCC BAA-1331).